We begin with the raw amino-acid sequence, 356 residues long: Histidinol-phosphate aminotransferase (356 aa).

Lys214 is subject to N6-(pyridoxal phosphate)lysine.

The protein belongs to the class-II pyridoxal-phosphate-dependent aminotransferase family. Histidinol-phosphate aminotransferase subfamily. As to quaternary structure, homodimer. It depends on pyridoxal 5'-phosphate as a cofactor.

The catalysed reaction is L-histidinol phosphate + 2-oxoglutarate = 3-(imidazol-4-yl)-2-oxopropyl phosphate + L-glutamate. The protein operates within amino-acid biosynthesis; L-histidine biosynthesis; L-histidine from 5-phospho-alpha-D-ribose 1-diphosphate: step 7/9. In Escherichia coli O9:H4 (strain HS), this protein is Histidinol-phosphate aminotransferase.